Reading from the N-terminus, the 702-residue chain is NAD(P)H-quinone oxidoreductase subunit 5, chloroplastic (702 aa).

Transmembrane regions (helical) follow at residues 1-21 (WVIPLLPLPVIMSMGFGLFFI), 31-51 (IWAFPSVLFLSIAIVYSVHLS), 81-101 (IDPLTSIMLILITTVGILVLI), 117-137 (FVYISFFTTSMLGLVTSSNLI), 139-159 (IYFFWELVGMCSYLLIGFWFT), 177-197 (GDFGLLLGILGFFWITGSLEF), 211-231 (NGINSLLTTLCAFLLFLGAVA), 250-270 (TPISALIHAATMVAAGIFLLA), 272-292 (LFPLFISIPLIMTLISLVGTI), 319-339 (LGYMMLALGIGSYQAALFHLI), 346-366 (ALLFLGSGSVIHSMEPLVGYS), 388-408 (TTFLWGTLSLCGIPPLACFWS), 417-437 (WLYSPFFGIIASFTAGLTAFY), 534-554 (LFPLLILLFFTLFIGFIGISF), and 602-622 (SLAIIGLFIAYILYGSAYSFF).

The protein belongs to the complex I subunit 5 family. As to quaternary structure, NDH is composed of at least 16 different subunits, 5 of which are encoded in the nucleus.

The protein localises to the plastid. It localises to the chloroplast thylakoid membrane. The catalysed reaction is a plastoquinone + NADH + (n+1) H(+)(in) = a plastoquinol + NAD(+) + n H(+)(out). It carries out the reaction a plastoquinone + NADPH + (n+1) H(+)(in) = a plastoquinol + NADP(+) + n H(+)(out). Functionally, NDH shuttles electrons from NAD(P)H:plastoquinone, via FMN and iron-sulfur (Fe-S) centers, to quinones in the photosynthetic chain and possibly in a chloroplast respiratory chain. The immediate electron acceptor for the enzyme in this species is believed to be plastoquinone. Couples the redox reaction to proton translocation, and thus conserves the redox energy in a proton gradient. This chain is NAD(P)H-quinone oxidoreductase subunit 5, chloroplastic (ndhF), found in Poa pratensis (Kentucky bluegrass).